A 1863-amino-acid polypeptide reads, in one-letter code: 5'-3' DNA helicase ZGRF1 (1863 aa).

Disordered regions lie at residues 78-110 (SRAV…QPSG), 132-196 (ENSE…PLSL), and 300-349 (TQSI…PEAQ). Positions 81–90 (VEPDGSREAL) are enriched in basic and acidic residues. The segment covering 92–105 (SGSRTLVSSSRSLG) has biased composition (low complexity). Polar residues-rich tracts occupy residues 173 to 185 (PVST…ITFS) and 300 to 321 (TQSI…TTSR). Residues S331 and S445 each carry the phosphoserine modification. Disordered regions lie at residues 460–496 (PVSP…SKSN), 524–545 (TSDT…ERWE), and 610–664 (GDVK…GVSP). Residues 533–545 (EDSRLSQDSERWE) are compositionally biased toward basic and acidic residues. C1111, H1113, C1136, and C1144 together coordinate Zn(2+). A GRF-type zinc finger spans residues 1111-1153 (CHHNQPAKLVMVKKEGPNKGRLFYTCDKSKDNQCKFFKWLEEV).

As to quaternary structure, interacts with DNA repair protein RAD51; the interaction promotes RAD51 strand exchange activity. Also interacts with DNA repair proteins EXO1 and BRCA1; the interactions are increased following DNA damage induction.

It localises to the nucleus. It carries out the reaction ATP + H2O = ADP + phosphate + H(+). The enzyme catalyses Couples ATP hydrolysis with the unwinding of duplex DNA at the replication fork by translocating in the 5'-3' direction. This creates two antiparallel DNA single strands (ssDNA). The leading ssDNA polymer is the template for DNA polymerase III holoenzyme which synthesizes a continuous strand.. Functionally, 5'-3' DNA helicase which is recruited to sites of DNA damage and promotes repair of replication-blocking DNA lesions through stimulation of homologous recombination (HR). Promotes HR by directly stimulating RAD51-mediated strand exchange activity. Not required to load RAD51 at sites of DNA damage but promotes recombinational repair after RAD51 recruitment. Also promotes HR by positively regulating EXO1-mediated DNA end resection of DNA double-strand breaks. Required for recruitment of replication protein RPA2 to DNA damage sites. Promotes the initiation of the G2/M checkpoint but not its maintenance. Catalyzes Holliday junction branch migration and dissociation of D-loops and DNA flaps. This chain is 5'-3' DNA helicase ZGRF1 (Zgrf1), found in Mus musculus (Mouse).